The sequence spans 434 residues: Glutamyl-tRNA reductase (434 aa).

Substrate is bound by residues 49 to 52 (TCNR), S109, 114 to 116 (EPQ), and Q120. The active-site Nucleophile is C50. An NADP(+)-binding site is contributed by 189 to 194 (GAGEMC).

The protein belongs to the glutamyl-tRNA reductase family. In terms of assembly, homodimer.

The catalysed reaction is (S)-4-amino-5-oxopentanoate + tRNA(Glu) + NADP(+) = L-glutamyl-tRNA(Glu) + NADPH + H(+). It participates in porphyrin-containing compound metabolism; protoporphyrin-IX biosynthesis; 5-aminolevulinate from L-glutamyl-tRNA(Glu): step 1/2. Its function is as follows. Catalyzes the NADPH-dependent reduction of glutamyl-tRNA(Glu) to glutamate 1-semialdehyde (GSA). This Geobacter metallireducens (strain ATCC 53774 / DSM 7210 / GS-15) protein is Glutamyl-tRNA reductase.